The primary structure comprises 257 residues: UPF0246 protein YaaA (257 aa).

It belongs to the UPF0246 family.

In Salmonella typhi, this protein is UPF0246 protein YaaA.